The following is a 348-amino-acid chain: uncharacterized protein (348 aa).

The NADP(+) site is built by Lys41 and Tyr170. Ser339 is modified (phosphoserine).

The protein belongs to the NAD(P)-dependent epimerase/dehydratase family. Dihydroflavonol-4-reductase subfamily.

This is an uncharacterized protein from Saccharomyces cerevisiae (strain ATCC 204508 / S288c) (Baker's yeast).